Here is an 853-residue protein sequence, read N- to C-terminus: DNA mismatch repair protein MutS (853 aa).

614–621 (GPNMGGKS) contacts ATP.

The protein belongs to the DNA mismatch repair MutS family.

Functionally, this protein is involved in the repair of mismatches in DNA. It is possible that it carries out the mismatch recognition step. This protein has a weak ATPase activity. The protein is DNA mismatch repair protein MutS of Escherichia coli (strain K12 / MC4100 / BW2952).